Here is a 137-residue protein sequence, read N- to C-terminus: Large ribosomal subunit protein uL16 (137 aa).

Belongs to the universal ribosomal protein uL16 family. As to quaternary structure, part of the 50S ribosomal subunit.

Binds 23S rRNA and is also seen to make contacts with the A and possibly P site tRNAs. This Pseudomonas syringae pv. tomato (strain ATCC BAA-871 / DC3000) protein is Large ribosomal subunit protein uL16.